We begin with the raw amino-acid sequence, 900 residues long: 3'-5' exonuclease DinG (900 aa).

Residues 8 to 161 (VVDLETTGNQ…DEDAATTAQL (154 aa)) enclose the Exonuclease domain. In terms of domain architecture, Helicase ATP-binding spans 241-496 (TLVTKELGLT…KSIDLLEQQR (256 aa)). 276–283 (APLGSGKS) is an ATP binding site. The DEAH box motif lies at 448–451 (DEAH). The region spanning 714–883 (YVIEYVSVVE…RYRQKKGDIK (170 aa)) is the Helicase C-terminal domain.

Belongs to the helicase family. DinG subfamily. Type 2 sub-subfamily.

In terms of biological role, 3'-5' exonuclease. The sequence is that of 3'-5' exonuclease DinG from Staphylococcus saprophyticus subsp. saprophyticus (strain ATCC 15305 / DSM 20229 / NCIMB 8711 / NCTC 7292 / S-41).